A 225-amino-acid chain; its full sequence is Thymidylate kinase (225 aa).

9–16 provides a ligand contact to ATP; it reads GIEGCGKT.

Belongs to the thymidylate kinase family.

It catalyses the reaction dTMP + ATP = dTDP + ADP. Functionally, phosphorylation of dTMP to form dTDP in both de novo and salvage pathways of dTTP synthesis. This Geobacter sp. (strain M21) protein is Thymidylate kinase.